A 243-amino-acid chain; its full sequence is Pyridoxine 5'-phosphate synthase (243 aa).

N9 provides a ligand contact to 3-amino-2-oxopropyl phosphate. Residue 11-12 (DH) coordinates 1-deoxy-D-xylulose 5-phosphate. A 3-amino-2-oxopropyl phosphate-binding site is contributed by R20. H45 acts as the Proton acceptor in catalysis. 1-deoxy-D-xylulose 5-phosphate is bound by residues R47 and H52. E72 acts as the Proton acceptor in catalysis. T102 contacts 1-deoxy-D-xylulose 5-phosphate. H193 (proton donor) is an active-site residue. Residues G194 and 215 to 216 (GH) contribute to the 3-amino-2-oxopropyl phosphate site.

It belongs to the PNP synthase family. Homooctamer; tetramer of dimers.

The protein resides in the cytoplasm. It carries out the reaction 3-amino-2-oxopropyl phosphate + 1-deoxy-D-xylulose 5-phosphate = pyridoxine 5'-phosphate + phosphate + 2 H2O + H(+). It functions in the pathway cofactor biosynthesis; pyridoxine 5'-phosphate biosynthesis; pyridoxine 5'-phosphate from D-erythrose 4-phosphate: step 5/5. Its function is as follows. Catalyzes the complicated ring closure reaction between the two acyclic compounds 1-deoxy-D-xylulose-5-phosphate (DXP) and 3-amino-2-oxopropyl phosphate (1-amino-acetone-3-phosphate or AAP) to form pyridoxine 5'-phosphate (PNP) and inorganic phosphate. The chain is Pyridoxine 5'-phosphate synthase from Shigella dysenteriae serotype 1 (strain Sd197).